A 204-amino-acid chain; its full sequence is 8-oxoguanine DNA glycosylase/AP lyase (204 aa).

Active-site residues include Lys129 and Asp147.

It belongs to the type-2 OGG1 family.

The enzyme catalyses 2'-deoxyribonucleotide-(2'-deoxyribose 5'-phosphate)-2'-deoxyribonucleotide-DNA = a 3'-end 2'-deoxyribonucleotide-(2,3-dehydro-2,3-deoxyribose 5'-phosphate)-DNA + a 5'-end 5'-phospho-2'-deoxyribonucleoside-DNA + H(+). Functionally, catalyzes the excision of an oxidatively damaged form of guanine (7,8-dihydro-8-oxoguanine = 8-oxoG) from DNA. Also cleaves the DNA backbone at apurinic/apyrimidinic sites (AP sites). Prefers oligomers containing 8-oxoG:C, 8-oxoG:T and 8-oxoG:G base pairs, and is less effective on oligomers containing 8-oxoG:A mispairs. The polypeptide is 8-oxoguanine DNA glycosylase/AP lyase (Thermoplasma volcanium (strain ATCC 51530 / DSM 4299 / JCM 9571 / NBRC 15438 / GSS1)).